The sequence spans 674 residues: Kelch repeat and BTB domain-containing protein 6 (674 aa).

The disordered stretch occupies residues 1–28 (MQSREDAPRSRRLASPRGGKRPKKIHKP). Over residues 10-27 (SRRLASPRGGKRPKKIHK) the composition is skewed to basic residues. Positions 63 to 138 (CDVTIEVVTP…CYTGRVSLSE (76 aa)) constitute a BTB domain. Kelch repeat units lie at residues 386–435 (AVCI…YLNG), 436–484 (YIYI…VIRD), 486–523 (LYALNSKRMFCYDPSHNMWLKCVSLKRNDFQEACVFNE), 524–564 (EIYC…IIKH), 567–616 (KLLL…CLSA), and 642–673 (TEWDLGGFSEPDSESGSSSSLSDDDFWVRVAP). The interval 631-674 (TEEEEIPSESSTEWDLGGFSEPDSESGSSSSLSDDDFWVRVAPQ) is disordered. The ATG8 interaction motif (AIM) motif lies at 668–671 (WVRV).

As to quaternary structure, core component of a BCR3 (BTB-CUL3-RBX1) E3 ubiquitin ligase complex, also named Cul3-RING ubiquitin ligase complex CUL3(KBTBD6/7), composed of CUL3, RBX1, KBTBD6 and KBTBD7. Interacts with GABARAP; the interaction is direct and is required for the ubiquitination of TIAM1. Interacts with GABARAPL1, GABARAPL2 and MAP1LC3B; the interaction is direct.

The protein localises to the cytoplasm. It localises to the nucleus. It participates in protein modification; protein ubiquitination. As part of the CUL3(KBTBD6/7) E3 ubiquitin ligase complex functions as a substrate adapter for the RAC1 guanine exchange factor (GEF) TIAM1, mediating its 'Lys-48' ubiquitination and proteasomal degradation. By controlling this ubiquitination, regulates RAC1 signal transduction and downstream biological processes including the organization of the cytoskeleton, cell migration and cell proliferation. Ubiquitination of TIAM1 requires the membrane-associated protein GABARAP which may restrict locally the activity of the complex. The polypeptide is Kelch repeat and BTB domain-containing protein 6 (Homo sapiens (Human)).